The sequence spans 112 residues: MNGTFFNHTLMEQVAYNNTTSQDLGSLMGCCNGSQTVITNDGGSLILIPDERSLFITRVVQIAVLCVLSLTVLFGIFFLGCNLLIKSESMINFLVKDRRPSKDVGAVILGLY.

The chain crosses the membrane as a helical span at residues 59–79 (VVQIAVLCVLSLTVLFGIFFL).

The protein belongs to the reprimo family.

Its subcellular location is the membrane. The polypeptide is Reprimo-like protein (rprml) (Xenopus laevis (African clawed frog)).